The sequence spans 122 residues: Holo-[acyl-carrier-protein] synthase (122 aa).

Mg(2+)-binding residues include Asp-5 and Glu-54.

It belongs to the P-Pant transferase superfamily. AcpS family. Mg(2+) serves as cofactor.

Its subcellular location is the cytoplasm. It catalyses the reaction apo-[ACP] + CoA = holo-[ACP] + adenosine 3',5'-bisphosphate + H(+). Transfers the 4'-phosphopantetheine moiety from coenzyme A to a Ser of acyl-carrier-protein. This chain is Holo-[acyl-carrier-protein] synthase, found in Aquifex aeolicus (strain VF5).